The following is a 311-amino-acid chain: Methionyl-tRNA formyltransferase (311 aa).

110–113 (SLLP) serves as a coordination point for (6S)-5,6,7,8-tetrahydrofolate.

This sequence belongs to the Fmt family.

The enzyme catalyses L-methionyl-tRNA(fMet) + (6R)-10-formyltetrahydrofolate = N-formyl-L-methionyl-tRNA(fMet) + (6S)-5,6,7,8-tetrahydrofolate + H(+). Its function is as follows. Attaches a formyl group to the free amino group of methionyl-tRNA(fMet). The formyl group appears to play a dual role in the initiator identity of N-formylmethionyl-tRNA by promoting its recognition by IF2 and preventing the misappropriation of this tRNA by the elongation apparatus. The polypeptide is Methionyl-tRNA formyltransferase (Streptococcus equi subsp. zooepidemicus (strain H70)).